The sequence spans 257 residues: Imidazole glycerol phosphate synthase subunit HisF (257 aa).

Residues Asp-12 and Asp-131 contribute to the active site.

The protein belongs to the HisA/HisF family. As to quaternary structure, heterodimer of HisH and HisF.

The protein localises to the cytoplasm. It carries out the reaction 5-[(5-phospho-1-deoxy-D-ribulos-1-ylimino)methylamino]-1-(5-phospho-beta-D-ribosyl)imidazole-4-carboxamide + L-glutamine = D-erythro-1-(imidazol-4-yl)glycerol 3-phosphate + 5-amino-1-(5-phospho-beta-D-ribosyl)imidazole-4-carboxamide + L-glutamate + H(+). The protein operates within amino-acid biosynthesis; L-histidine biosynthesis; L-histidine from 5-phospho-alpha-D-ribose 1-diphosphate: step 5/9. IGPS catalyzes the conversion of PRFAR and glutamine to IGP, AICAR and glutamate. The HisF subunit catalyzes the cyclization activity that produces IGP and AICAR from PRFAR using the ammonia provided by the HisH subunit. This is Imidazole glycerol phosphate synthase subunit HisF from Burkholderia lata (strain ATCC 17760 / DSM 23089 / LMG 22485 / NCIMB 9086 / R18194 / 383).